Reading from the N-terminus, the 450-residue chain is Trehalose/maltose-binding protein MalE (450 aa).

The signal sequence occupies residues 1–24 (MNVKKVLLGLFLVGVLGIAVVASG). Alpha,alpha-trehalose-binding residues include glutamate 57, threonine 84, arginine 89, aspartate 110, tyrosine 161, aspartate 163, tyrosine 217, glutamate 279, tryptophan 297, tyrosine 299, glycine 334, tryptophan 335, tryptophan 371, and arginine 404.

It belongs to the bacterial solute-binding protein 1 family. As to quaternary structure, the complex is composed of two ATP-binding proteins (MalK), two transmembrane proteins (MalG and MalF) and a solute-binding protein (MalE). Glycosylated.

The protein localises to the cell membrane. Functionally, part of the ABC transporter complex MalEFGK involved in trehalose/maltose import. Binds maltose and trehalose. In Thermococcus litoralis (strain ATCC 51850 / DSM 5473 / JCM 8560 / NS-C), this protein is Trehalose/maltose-binding protein MalE (malE).